A 607-amino-acid chain; its full sequence is Probable LRR receptor-like serine/threonine-protein kinase At5g65240 (607 aa).

Positions 1 to 24 (MALLIITALVFSSLWSSVSPDAQG) are cleaved as a signal peptide. At 25-219 (DALFALRSSL…SGDSSSRKTG (195 aa)) the chain is on the extracellular side. Residues asparagine 74 and asparagine 110 are each glycosylated (N-linked (GlcNAc...) asparagine). LRR repeat units lie at residues 87–111 (LTTL…IGNL), 112–135 (SSLT…LGNL), 137–159 (NLQF…LTGL), and 160–183 (SKLI…LFKI). Asparagine 149, asparagine 171, asparagine 187, and asparagine 192 each carry an N-linked (GlcNAc...) asparagine glycan. Residues 220–240 (IIAGVVSGIAVILLGFFFFFF) form a helical membrane-spanning segment. The Cytoplasmic portion of the chain corresponds to 241–607 (CKDKHKGYKR…QDAIELSGGR (367 aa)). Threonine 281 carries the post-translational modification Phosphothreonine. One can recognise a Protein kinase domain in the interval 284–568 (FSEKNVLGQG…EGEGLAERWE (285 aa)). Position 290 to 298 (290 to 298 (LGQGGFGKV)) interacts with ATP. At threonine 307 the chain carries Phosphothreonine. Lysine 312 is a binding site for ATP. Phosphoserine is present on serine 365. Aspartate 411 functions as the Proton acceptor in the catalytic mechanism. Phosphothreonine occurs at positions 444, 445, and 450. A Phosphoserine modification is found at serine 460. Residue threonine 461 is modified to Phosphothreonine. Serine 465 carries the phosphoserine modification. Threonine 541 bears the Phosphothreonine mark.

Belongs to the protein kinase superfamily. Ser/Thr protein kinase family.

It localises to the cell membrane. It carries out the reaction L-seryl-[protein] + ATP = O-phospho-L-seryl-[protein] + ADP + H(+). The enzyme catalyses L-threonyl-[protein] + ATP = O-phospho-L-threonyl-[protein] + ADP + H(+). This chain is Probable LRR receptor-like serine/threonine-protein kinase At5g65240, found in Arabidopsis thaliana (Mouse-ear cress).